The chain runs to 409 residues: Arginine deiminase (409 aa).

The active-site Amidino-cysteine intermediate is the Cys-397.

Belongs to the arginine deiminase family.

The protein localises to the cytoplasm. It carries out the reaction L-arginine + H2O = L-citrulline + NH4(+). The protein operates within amino-acid degradation; L-arginine degradation via ADI pathway; carbamoyl phosphate from L-arginine: step 1/2. The chain is Arginine deiminase (arcA) from Metamycoplasma hominis (Mycoplasma hominis).